The chain runs to 807 residues: Phenylalanine--tRNA ligase beta subunit (807 aa).

One can recognise a tRNA-binding domain in the interval 39 to 153 (SARAQGVVVG…SLPPNGSPVA (115 aa)). Positions 407 to 491 (AEAGPVLLRR…RLVGFDRFGA (85 aa)) constitute a B5 domain. Residues D469, D475, E478, and E479 each coordinate Mg(2+). Residues 713 to 806 (PTVPFSERDL…LSKQFQAELR (94 aa)) form the FDX-ACB domain.

This sequence belongs to the phenylalanyl-tRNA synthetase beta subunit family. Type 1 subfamily. Tetramer of two alpha and two beta subunits. Requires Mg(2+) as cofactor.

It localises to the cytoplasm. It carries out the reaction tRNA(Phe) + L-phenylalanine + ATP = L-phenylalanyl-tRNA(Phe) + AMP + diphosphate + H(+). This Synechococcus sp. (strain CC9605) protein is Phenylalanine--tRNA ligase beta subunit.